A 91-amino-acid polypeptide reads, in one-letter code: Putative septation protein SpoVG (91 aa).

It belongs to the SpoVG family.

Could be involved in septation. This chain is Putative septation protein SpoVG, found in Caldanaerobacter subterraneus subsp. tengcongensis (strain DSM 15242 / JCM 11007 / NBRC 100824 / MB4) (Thermoanaerobacter tengcongensis).